The following is a 435-amino-acid chain: tRNA modification GTPase MnmE (435 aa).

Residues Arg24, Glu85, and Arg124 each coordinate (6S)-5-formyl-5,6,7,8-tetrahydrofolate. The 142-residue stretch at Gly220 to Arg361 folds into the TrmE-type G domain. Asn230 contributes to the K(+) binding site. Residues Asn230–Ser235, Ser249–Thr255, and Asp274–Gly277 each bind GTP. Position 234 (Ser234) interacts with Mg(2+). Residues Ser249, Ile251, and Thr254 each coordinate K(+). Position 255 (Thr255) interacts with Mg(2+). Lys435 is a binding site for (6S)-5-formyl-5,6,7,8-tetrahydrofolate.

The protein belongs to the TRAFAC class TrmE-Era-EngA-EngB-Septin-like GTPase superfamily. TrmE GTPase family. Homodimer. Heterotetramer of two MnmE and two MnmG subunits. Requires K(+) as cofactor.

It is found in the cytoplasm. In terms of biological role, exhibits a very high intrinsic GTPase hydrolysis rate. Involved in the addition of a carboxymethylaminomethyl (cmnm) group at the wobble position (U34) of certain tRNAs, forming tRNA-cmnm(5)s(2)U34. The protein is tRNA modification GTPase MnmE of Gluconacetobacter diazotrophicus (strain ATCC 49037 / DSM 5601 / CCUG 37298 / CIP 103539 / LMG 7603 / PAl5).